Here is a 535-residue protein sequence, read N- to C-terminus: Sucrose transport protein SUT5 (535 aa).

The Cytoplasmic portion of the chain corresponds to 1-53; sequence MEEGRRGDREAKSAAGWTALSTTKTTLEEKRRLQANGSVGGDAGTSGFRRIVR. Residues 54–74 form a helical membrane-spanning segment; the sequence is LFFACMVAGGIQYGWALQLSL. Residues 75-87 are Extracellular-facing; that stretch reads LSPYSQTLGISHS. The helical transmembrane segment at 88 to 108 threads the bilayer; the sequence is YVSLTWICGPIAGFVVQPIVG. Topologically, residues 109 to 122 are cytoplasmic; sequence YYSDRCTMKMGRRR. The helical transmembrane segment at 123–143 threads the bilayer; that stretch reads PFILVGCLIICISVMIIGFSA. The Extracellular portion of the chain corresponds to 144–163; that stretch reads DIGRHLGDTKEHCSTYTGPR. The helical transmembrane segment at 164 to 184 threads the bilayer; it reads WSAAMVYIVGFWFLDFANNTV. At 185–203 the chain is on the cytoplasmic side; that stretch reads QGPARAMMADLSAGHHGPN. The chain crosses the membrane as a helical span at residues 204-224; the sequence is VGQSIFSLWMAIGSVLGYLSG. At 225-249 the chain is on the extracellular side; sequence ANGKWHEWFPWLKTAACCDACANLK. The chain crosses the membrane as a helical span at residues 250–270; sequence GAFFTAVLLIVVSMTVTMYLA. Residues 271–302 are Cytoplasmic-facing; sequence DEMPLDKQDVDTSGGGGCAVFVDLFKSLRNLP. Residues 303 to 323 traverse the membrane as a helical segment; sequence PAMFKVLAVTAVTWLSWFPFI. Over 324 to 354 the chain is Extracellular; the sequence is QYNTDWMGREIYHGEPQGTAAKADVYDAGVR. A helical transmembrane segment spans residues 355-375; that stretch reads EGAMGLLFCSVALGVTSFVIP. Residues 376–384 are Cytoplasmic-facing; that stretch reads KLCRRLTSK. The helical transmembrane segment at 385-405 threads the bilayer; it reads VVWSISNFLVFALMAVMVAVG. The Extracellular segment spans residues 406 to 429; sequence MVSMRGYRPSLAAGLTGPDPTLKA. A helical membrane pass occupies residues 430 to 450; it reads VALVVFALIGIPQAVLFSVPW. The Cytoplasmic segment spans residues 451–465; it reads AVASEVTAEEGGGQG. Residues 466–486 form a helical membrane-spanning segment; that stretch reads LAIGVLNIAIVVPQLVIALTA. Topologically, residues 487 to 498 are extracellular; it reads GPIDGAFNKGNT. A helical membrane pass occupies residues 499 to 519; that stretch reads PAFGIGGAFAFICGVLALIWL. Over 520 to 535 the chain is Cytoplasmic; sequence PKTRGVSNAAVVAGGH.

Belongs to the glycoside-pentoside-hexuronide (GPH) cation symporter transporter (TC 2.A.2.4) family. As to quaternary structure, homodimer.

The protein localises to the cell membrane. It functions in the pathway glycan biosynthesis; sucrose metabolism. Functionally, responsible for the transport of sucrose into the cell, with the concomitant uptake of protons (symport system). May also transport other glucosides. The polypeptide is Sucrose transport protein SUT5 (SUT5) (Oryza sativa subsp. indica (Rice)).